An 842-amino-acid chain; its full sequence is Translation initiation factor IF-2 (842 aa).

2 disordered regions span residues 42-91 and 139-253; these read ETKR…NLSS and LQKQ…NQEP. 2 stretches are compositionally biased toward basic and acidic residues: residues 176 to 190 and 199 to 214; these read IEKRKIDENQEEERH and SEIRAPKIVKGADERR. The tr-type G domain occupies 340–509; it reads PRPPVVTIMG…LLQAEMLDLK (170 aa). The interval 349–356 is G1; sequence GHVDHGKT. 349-356 lines the GTP pocket; it reads GHVDHGKT. Residues 374–378 form a G2 region; it reads GITQH. The interval 395–398 is G3; that stretch reads DTPG. GTP is bound by residues 395–399 and 449–452; these read DTPGH and NKID. The segment at 449–452 is G4; the sequence is NKID. The tract at residues 485–487 is G5; that stretch reads SAK.

This sequence belongs to the TRAFAC class translation factor GTPase superfamily. Classic translation factor GTPase family. IF-2 subfamily.

It is found in the cytoplasm. One of the essential components for the initiation of protein synthesis. Protects formylmethionyl-tRNA from spontaneous hydrolysis and promotes its binding to the 30S ribosomal subunits. Also involved in the hydrolysis of GTP during the formation of the 70S ribosomal complex. The protein is Translation initiation factor IF-2 of Bartonella tribocorum (strain CIP 105476 / IBS 506).